The following is a 398-amino-acid chain: Succinate--CoA ligase [ADP-forming] subunit beta (398 aa).

Positions 9–253 (KEILNSFGVR…VREENATEVE (245 aa)) constitute an ATP-grasp domain. ATP contacts are provided by residues K50, 57 to 59 (GRG), V106, and E116. Mg(2+)-binding residues include N208 and D222. Substrate contacts are provided by residues N273 and 330–332 (GIV).

The protein belongs to the succinate/malate CoA ligase beta subunit family. As to quaternary structure, heterotetramer of two alpha and two beta subunits. Mg(2+) is required as a cofactor.

The catalysed reaction is succinate + ATP + CoA = succinyl-CoA + ADP + phosphate. The enzyme catalyses GTP + succinate + CoA = succinyl-CoA + GDP + phosphate. The protein operates within carbohydrate metabolism; tricarboxylic acid cycle; succinate from succinyl-CoA (ligase route): step 1/1. Succinyl-CoA synthetase functions in the citric acid cycle (TCA), coupling the hydrolysis of succinyl-CoA to the synthesis of either ATP or GTP and thus represents the only step of substrate-level phosphorylation in the TCA. The beta subunit provides nucleotide specificity of the enzyme and binds the substrate succinate, while the binding sites for coenzyme A and phosphate are found in the alpha subunit. The sequence is that of Succinate--CoA ligase [ADP-forming] subunit beta from Christiangramia forsetii (strain DSM 17595 / CGMCC 1.15422 / KT0803) (Gramella forsetii).